We begin with the raw amino-acid sequence, 101 residues long: Precursor of CEP6 (101 aa).

Residues 1–26 (MKLSVYIILSILFISTVFYEIQFTEA) form the signal peptide. A propeptide spanning residues 27-48 (RQLRKTDDQDHDDHHFTVGYTD) is cleaved from the precursor. Over residues 29 to 42 (LRKTDDQDHDDHHF) the composition is skewed to basic and acidic residues. A disordered region spans residues 29 to 101 (LRKTDDQDHD…HAVKNNEPNA (73 aa)). Hydroxyproline occurs at positions 52, 55, and 59. Residues 64 to 77 (KMKENEENAGGYKD) constitute a propeptide that is removed on maturation. The segment covering 64–79 (KMKENEENAGGYKDDF) has biased composition (basic and acidic residues). Hydroxyproline occurs at positions 81, 84, and 88. Positions 93–101 (AVKNNEPNA) are excised as a propeptide.

The protein belongs to the C-terminally encoded plant signaling peptide (CEP) family. Interacts with CEP receptors (e.g. CEPR1 and CEPR2). Post-translationally, the mature small signaling peptide is generated by proteolytic processing of the longer precursor. In terms of tissue distribution, expressed in lateral root primordia and in lateral roots excluding the meristem region. Also present in the aerial tissues, such as leaf petioles and the shoot apex region.

The protein localises to the secreted. Its subcellular location is the extracellular space. It localises to the apoplast. Its function is as follows. Extracellular signaling peptide that represses primary root growth rate. Modulates leaf morphology. Regulates systemic nitrogen (N)-demand signaling. Mediates up-regulation of genes involved in N uptake and assimilation pathways. The sequence is that of Precursor of CEP6 from Arabidopsis thaliana (Mouse-ear cress).